A 2543-amino-acid chain; its full sequence is MAQEPRIAVIGLSYRAPGVKGKSLWEYLSQARSAWTSVPADRYDQSAYYQAGGQKSGVVGTKGAHFIDSPFGFDAAFFNMRADEAKHADPQHRLMLEVALEAAEDAGKTFPDLAGKKIGVFVGSGQHEYAQRLGDDEHAIQTFSGTGAAPCMAANRVSYFFDIDGPSVVADAACASSVYAADMAVRALRNGECDGAFVGSASLNLSPAGWLVLEKTGALSEHGRSYSYDTKASGFGRGEGAACLLLKRYDDAIRDGDPVQALILSSACNHSGRSDGITMPNGLAQQKLLWSVHNAAGVDPSDTPVVEGHGTGTAVGDPIEAGAFTAVLARNRTANNPIYLGSLKSNFGHLEGASGVLAMVKAIMMVNKGIVLPTAGFEKINPKIEGHEKIKIAEMPLPWPKNEPRRCIVTNFGFGGSNSAILLEGPPPKAVSDDHALNGAAGTNGHALNGTNGTNGHALNGANGTNGHAINGANGTNGHHENGNGVATQNQRLYVFSAKTQKSLTSYLSTFDEYLDEAPESSEFAKDLSYTLGQRRNHYPYRVAAVADSIETLQEKLSALKPSRTKERGVLFVFTGQGAQHAEMASGLESFEIFNKTLQEAEMQLQTMGAPWSLIEELRKPSSESRVDDAEISQPACTAVQLALVALLKEWGVTPAAVTGHSSGEIAAAYAAGLITFQQAIAASYFRGQAAAQLAAKQQPEEKGAMLALGVSFEEASKLIEEHAEAYATVAAVNSPNSVTISGDQSAIDNVHKAAEAKGLFARKLKVQMAYHSRHMEAVAASYLEDIKPYFQEDAPFLDKKSTTNPAFVSSVTGRVVDRIEASYWVKNLVQPVMFMDAVHGLLAPQHLGTGKAAQALPRVVIEVGPHAALKNPIKQTAELVQVQQNWTPASFTYLPTLFRGTDATQAVLELASSLFTLGARVELAAVNQTDKHNAEVLTELPAYAWDKTDYELRPRSTNDKYFPGENYHPLLGRKISPNASGERTYRQVFTLDEMPWIRDHVVGGATIFPMTGYMSCAIEAARRTLSTPAAAFLVTDFHVVRSLEIHEEETVDMTTKLRPAAIGEGAFSTKVWSFEMTTWAEESGWTKHSWGQIEAEMTDMSMDTPTFRASLPLVNKTTGLKEHDINAEYQTAGLRATLYGPSFRNNVKFYEGKGYTILEHRLRDLGEALRDPYARGSPVSTDPPTLDGFLQGGGPLQYDEHGRRPAQMPNYISRFRVSNKIPSDPSHRFDVVMRRLDYDVRGGRMHVGVAAFSRGPNDELTPIAEWESCAFRNIGSAEEVIDPSATVPDNWSWEVLPRYDFVPQDQLRKKLCDAVGELGVEEDIRIRKGEEAACYYIEKALKETADLDYSKLPPHLARFVRWGYKTVAEYDLDYSRGEPTALLNEVRTSDAQGELICIMGEHIVDILRGKIEPLEIMLTDGRLTRHYEADVTNAHLSKVLGYLTEYLADLEPNQRILEIGGGTAGTTLPVLEGLSRGRDELAVLDYTFTDISTGFFEMARKKLSDWSRRITYKRLDITQDPSDQGFEQQDYDVVIAANVLHATADMVKTMTHVRSLLKPGGKLILLEAMRHPASVLPFSLLPGWWEAEDKYRDHEEGPMMPATVWNQLLLDSGFSGVDVVLPSRYGTDKPFVSILCSTRIGKQDNSRPITICGPFLDENEVEFAQSVADLISKELGYPTEMKPYAEIDPEDDPYYVFIDSPHESALQDMDQEKFKSLQTLLLHNTGLLWVTPEGASPDAKIIQGMVRTLRMEVDLKNLILFEDVPCTSQGAAGIMKLATKLRDSELSRDQDFDFAWQDGAIHLPRMRQLKEVKEQFAVEEGVAYRKMQNLWDNNDRGLEMTIDAAGSPDTIYFQRTDVSNIGEDEVVVRVEAAGVGHRDLEVILGSIPWAPPSYEGAGKIIRTGSRISHLREGDDVFFLTPDSSALATEVKLPSWLVGKIPQGITIHDAATLPLAYSLAVLALIQTARLRKNETVLIHAAAGAVGQACVALAQNVGAHVYVTAGNEAKREFLHEKFGIPKDRIFSSRTPEFRDQILSATANKGIDVIVNSLGGELMTETWALTAPFGRFIEIGKKDAFQNNNLPMKPFNRNVTYTGIDLRDLYQFRRDDIKDVFTEVVTLLQRGNIQPIGPVTTTPISQFASALRKLKSGEHMGKMVITLGKDDTVVAETALRPLNVTLKPDATYLVAGGTRGIGLDLAYWMIDHGARYIVLLGRSGASGPEAQKILNRYKDTDVCVKIFSCNVGHRDELAEVVEAIKDLPPVRGVVHSALLLSDKLFVNSTLEDWEIITTPRVKGAWNLHELMPDNLDFFVALSSFNGDTGNLGQAIYAGTAGFYNAFSQYRNSRGQYTVSIALPVVLDVGYVADNNLSEILKESLGVAITMADIRAIFGGILLGPSSPFVYNGRAQTFMVYIDGQPVQNGGWKYFHPVHTKVRLMSDRRRVKIASGGVDQHSASWTTAEDPLIGLTEAMITKVSAMTMIEREEVLPDAPLTSYNLDSLVSVELRNWIRRETAVELTLSAIMQADSLRALATEILSQRKAE.

In terms of domain architecture, Ketosynthase family 3 (KS3) spans 4–425; sequence EPRIAVIGLS…GSNSAILLEG (422 aa). Catalysis depends on for beta-ketoacyl synthase activity residues Cys174, His309, and His349. Residues 573–902 form a malonyl-CoA:ACP transacylase (MAT) domain region; sequence VFTGQGAQHA…TYLPTLFRGT (330 aa). The For malonyltransferase activity role is filled by Ser662. Residues 969–1101 form an N-terminal hotdog fold region; the sequence is HPLLGRKISP…GQIEAEMTDM (133 aa). In terms of domain architecture, PKS/mFAS DH spans 969–1281; it reads HPLLGRKISP…FRNIGSAEEV (313 aa). The interval 969–1283 is dehydratase (DH) domain; it reads HPLLGRKISP…NIGSAEEVID (315 aa). His1001 (proton acceptor; for dehydratase activity) is an active-site residue. The interval 1119–1281 is C-terminal hotdog fold; that stretch reads TGLKEHDINA…FRNIGSAEEV (163 aa). Residue Asp1188 is the Proton donor; for dehydratase activity of the active site. The interval 1438-1631 is methyltransferase (CMet) domain; the sequence is SKVLGYLTEY…LPSRYGTDKP (194 aa). The interval 1847-2159 is enoylreductase (ER) domain; that stretch reads GSPDTIYFQR…SGEHMGKMVI (313 aa). Residues 2184–2359 are ketoreductase (KR) domain; that stretch reads ATYLVAGGTR…YTVSIALPVV (176 aa). The region spanning 2463–2540 is the Carrier domain; it reads DPLIGLTEAM…ALATEILSQR (78 aa). Position 2500 is an O-(pantetheine 4'-phosphoryl)serine (Ser2500).

Its pathway is secondary metabolite biosynthesis. Functionally, highly reducing polyketide synthase; part of the gene cluster that mediates the biosynthesis of phomenoic acid, a long chain aliphatic carboxylic acid that does not appear to be essential for pathogenicity but may play a role in allowing to outcompete other fungi in the environmental niche via its antifungal properties. The polyketide synthase produces the long methylated aliphatic carboxylic acid chain of phomenoic acid. The cluster-specific cytochrome P450 monooxygenase may then hydroxylate the methyl group of carbon 31. The putative dehydrogenase YogA, which has no obvious role in phomenoic acid biosynthesis, may further modify phomenoic acid to produce a compound not identified yet. This is Highly reducing polyketide synthase PKS2 from Leptosphaeria maculans (strain JN3 / isolate v23.1.3 / race Av1-4-5-6-7-8) (Blackleg fungus).